Here is a 300-residue protein sequence, read N- to C-terminus: Protoheme IX farnesyltransferase 1 (300 aa).

The next 9 membrane-spanning stretches (helical) occupy residues 28–48 (VVAL…PTIL), 54–74 (VAGL…NHLI), 100–120 (ALLF…VFTN), 122–142 (LTAW…TAYL), 149–169 (NIVI…TAVT), 176–196 (ALLL…ALAI), 222–242 (CILL…LVGM), 243–263 (SGPL…YKAW), and 280–300 (FSIY…YLWA).

The protein belongs to the UbiA prenyltransferase family. Protoheme IX farnesyltransferase subfamily.

It is found in the cell inner membrane. The enzyme catalyses heme b + (2E,6E)-farnesyl diphosphate + H2O = Fe(II)-heme o + diphosphate. The protein operates within porphyrin-containing compound metabolism; heme O biosynthesis; heme O from protoheme: step 1/1. Its function is as follows. Converts heme B (protoheme IX) to heme O by substitution of the vinyl group on carbon 2 of heme B porphyrin ring with a hydroxyethyl farnesyl side group. The protein is Protoheme IX farnesyltransferase 1 of Shewanella sp. (strain MR-4).